We begin with the raw amino-acid sequence, 490 residues long: MESMIRIILLSLIIFITILFFIKQKKGKKSNTPASPPRLPLIGNLHQLGRHPHRSLCSLSNRYGPLMLLRFGLVPVLVVSSADVARDILKTYDRVFASRPRSKIFEKIFYEARDVALAPYGEYWRQMKSVCVLHLLTNKMVRSFRNVRQEEISLMMEKIQKSSSLQVNLSELLGSLTNDVISRVALGRKYSDETDFKELMKRLTKLLGEFCVGTYVPWLAWIDWISGLDGQLKKTGNDLDEFLEKVVQDHEDGDAQRTDFVDVLLRIQREKSVGFEIDRLSIKAIILDVVVGGTDTSYALMEWAMTELLHRPECLNRLQEEVRTICKGNSSVSEDDIKDMNYLKAVIKETMRLHPPLPLMVPHESTQDVRLGDYHIPAGTQVMINAWAIGREAATWGPDAEKFRPERHLNSSVDFRGHNFELIPFGAGRRICPAISFAVILIEVTLANLVHRYDWRLPEEYIEDQTNVAESTGMVIHRLFPLYAIVSSTT.

Residues 2-22 (ESMIRIILLSLIIFITILFFI) traverse the membrane as a helical segment. C432 lines the heme pocket.

The protein belongs to the cytochrome P450 family. Heme is required as a cofactor.

The protein resides in the membrane. This Arabidopsis thaliana (Mouse-ear cress) protein is Cytochrome P450 71A22 (CYP71A22).